The sequence spans 114 residues: MHEITLSQRALEIIEQQAQQAGARRVTGVWLKVGAFSCVEASALTFCFELVCRGTLAEGCELHIAEQQAECWCERCQQYVHLVSQHVRRCPLCNNDQLQIVADDGLQIQRLELE.

His-2 is a Ni(2+) binding site. 4 residues coordinate Zn(2+): Cys-73, Cys-76, Cys-90, and Cys-93.

The protein belongs to the HypA/HybF family.

Functionally, involved in the maturation of [NiFe] hydrogenases. Required for nickel insertion into the metal center of the hydrogenase. The polypeptide is Hydrogenase maturation factor HypA (Klebsiella pneumoniae (strain 342)).